The following is a 554-amino-acid chain: Serine/threonine-protein kinase ROP18 (554 aa).

Residues 17–40 (GLATLLPKTACLAGLNVALVFLLF) traverse the membrane as a helical segment. The region spanning 252-531 (LVRGAPLGSG…PLQALETAAF (280 aa)) is the Protein kinase domain. 3 residues coordinate ATP: Gly-262, Ala-264, and Lys-281. Residue Asn-306 is glycosylated (N-linked (GlcNAc...) asparagine). Residues Met-357, Ala-359, and Asp-362 each contribute to the ATP site. Asn-377 carries N-linked (GlcNAc...) asparagine glycosylation. Asp-409 functions as the Proton acceptor in the catalytic mechanism. Residue Asp-427 participates in ATP binding. Residue Asp-427 participates in Mg(2+) binding. N-linked (GlcNAc...) asparagine glycosylation occurs at Asn-434. Cysteines 478 and 497 form a disulfide.

The protein belongs to the protein kinase superfamily. Ser/Thr protein kinase family. Component of a complex at least composed of ROP18, GRA7 and ROP2. Component of a complex at least composed of ROP18 and ROP5. Interacts with GRA7 in the absence of ROP5. Interacts with mouse IRGB6 (TGTP1/TGTP2).

The protein resides in the parasitophorous vacuole membrane. Its subcellular location is the cytoplasmic vesicle. It localises to the secretory vesicle. It is found in the rhoptry. It carries out the reaction L-threonyl-[protein] + ATP = O-phospho-L-threonyl-[protein] + ADP + H(+). It catalyses the reaction L-seryl-[protein] + ATP = O-phospho-L-seryl-[protein] + ADP + H(+). Kinase activity is enhanced by polymorphic pseudokinase ROP5. Protein kinase. Virulence factor. Mediates parasite survival in mouse macrophages and monocytes. Reduces the accumulation of mouse IRGA6 (IIGP1) and IRGB6 (TGTP1/TGTP2), immunity-related GTPases (IRGs) that protect mice from infection by certain intracellular pathogens, on the parasitophorous vacuole and IRG-mediated killing of parasites by mouse cells; probably in connection with ROP5. In complex with GRA7, targets IRGs to prevent IRG-mediated parasite killing by mouse cells. Phosphorylates mouse IRGA6 (IIGP1); its activity toward mouse IRGA6 is promoted by GRA7 or ROP5. Phosphorylates mouse IRGB6 (TGTP1/TGTP2). Phosphorylates mouse IRGB10 (GM12250). Does not affect IFN-gamma (IFNG)-mediated parasite killing in human cells that do not possess the large variety of IRGs. This Toxoplasma gondii protein is Serine/threonine-protein kinase ROP18.